Here is a 121-residue protein sequence, read N- to C-terminus: ATP synthase epsilon chain (121 aa).

It belongs to the ATPase epsilon chain family. In terms of assembly, F-type ATPases have 2 components, CF(1) - the catalytic core - and CF(0) - the membrane proton channel. CF(1) has five subunits: alpha(3), beta(3), gamma(1), delta(1), epsilon(1). CF(0) has three main subunits: a, b and c.

The protein localises to the cell membrane. Produces ATP from ADP in the presence of a proton gradient across the membrane. The sequence is that of ATP synthase epsilon chain (atpC) from Mycobacterium bovis (strain ATCC BAA-935 / AF2122/97).